Reading from the N-terminus, the 251-residue chain is Hydroxyacylglutathione hydrolase (251 aa).

Zn(2+) is bound by residues His-53, His-55, Asp-57, His-58, His-110, Asp-127, and His-165.

The protein belongs to the metallo-beta-lactamase superfamily. Glyoxalase II family. As to quaternary structure, monomer. The cofactor is Zn(2+).

It carries out the reaction an S-(2-hydroxyacyl)glutathione + H2O = a 2-hydroxy carboxylate + glutathione + H(+). It participates in secondary metabolite metabolism; methylglyoxal degradation; (R)-lactate from methylglyoxal: step 2/2. Functionally, thiolesterase that catalyzes the hydrolysis of S-D-lactoyl-glutathione to form glutathione and D-lactic acid. This Salmonella dublin (strain CT_02021853) protein is Hydroxyacylglutathione hydrolase.